The sequence spans 35 residues: Photosystem II reaction center protein T (35 aa).

A helical transmembrane segment spans residues 3 to 23; it reads ALVYTFLLVSTLGIIFFAIFF.

It belongs to the PsbT family. PSII is composed of 1 copy each of membrane proteins PsbA, PsbB, PsbC, PsbD, PsbE, PsbF, PsbH, PsbI, PsbJ, PsbK, PsbL, PsbM, PsbT, PsbY, PsbZ, Psb30/Ycf12, at least 3 peripheral proteins of the oxygen-evolving complex and a large number of cofactors. It forms dimeric complexes.

It localises to the plastid. The protein localises to the chloroplast thylakoid membrane. Its function is as follows. Found at the monomer-monomer interface of the photosystem II (PS II) dimer, plays a role in assembly and dimerization of PSII. PSII is a light-driven water plastoquinone oxidoreductase, using light energy to abstract electrons from H(2)O, generating a proton gradient subsequently used for ATP formation. This is Photosystem II reaction center protein T from Cabomba caroliniana (Carolina fanwort).